The chain runs to 422 residues: Serine hydroxymethyltransferase (422 aa).

Residues leucine 120 and 124 to 126 contribute to the (6S)-5,6,7,8-tetrahydrofolate site; that span reads GHL. N6-(pyridoxal phosphate)lysine is present on lysine 228.

It belongs to the SHMT family. Homodimer. The cofactor is pyridoxal 5'-phosphate.

The protein resides in the cytoplasm. The catalysed reaction is (6R)-5,10-methylene-5,6,7,8-tetrahydrofolate + glycine + H2O = (6S)-5,6,7,8-tetrahydrofolate + L-serine. It functions in the pathway one-carbon metabolism; tetrahydrofolate interconversion. It participates in amino-acid biosynthesis; glycine biosynthesis; glycine from L-serine: step 1/1. Catalyzes the reversible interconversion of serine and glycine with tetrahydrofolate (THF) serving as the one-carbon carrier. This reaction serves as the major source of one-carbon groups required for the biosynthesis of purines, thymidylate, methionine, and other important biomolecules. Also exhibits THF-independent aldolase activity toward beta-hydroxyamino acids, producing glycine and aldehydes, via a retro-aldol mechanism. The polypeptide is Serine hydroxymethyltransferase (Actinobacillus succinogenes (strain ATCC 55618 / DSM 22257 / CCUG 43843 / 130Z)).